Consider the following 323-residue polypeptide: RNA polymerase II holoenzyme cyclin-like subunit (323 aa).

In terms of domain architecture, Cyclin N-terminal spans 45–176 (DSKQNGIEQS…LLEELESYLI (132 aa)).

The protein belongs to the cyclin family. Cyclin C subfamily. As to quaternary structure, component of the SRB8-11 complex which consists of SRB8, SSN2/SRB9, SSN3/SRB10 and SSN8/SRB11. The SRB8-11 complex associates with the Mediator complex. The SSN3/SRB10 and SSN8/SRB11 kinase-cyclin pair also associate with the RNA polymerase II holoenzyme. Interacts with ASK10.

The protein localises to the nucleus. Its function is as follows. Component of the SRB8-11 complex. The SRB8-11 complex is a regulatory module of the Mediator complex which is itself involved in regulation of basal and activated RNA polymerase II-dependent transcription. The SRB8-11 complex may be involved in the transcriptional repression of a subset of genes regulated by Mediator. It may inhibit the association of the Mediator complex with RNA polymerase II to form the holoenzyme complex. The SRB8-11 complex phosphorylates the C-terminal domain (CTD) of the largest subunit of RNA polymerase II RPB1 at serines 2 and 5. The SSN3/SRB10 and SSN8/SRB11 kinase-cyclin pair may also positively and negatively regulate numerous transcriptional activators in response to changes in nutritional and physiological conditions. The sequence is that of RNA polymerase II holoenzyme cyclin-like subunit (SSN8) from Saccharomyces cerevisiae (strain ATCC 204508 / S288c) (Baker's yeast).